A 200-amino-acid polypeptide reads, in one-letter code: Small ribosomal subunit protein uS4 (200 aa).

Residues 22–43 are disordered; the sequence is TGKELERRPYAPGQHGPTQRKK. Residues 92–170 enclose the S4 RNA-binding domain; sequence QRLDNIVYRL…VPEYVTFDAE (79 aa).

It belongs to the universal ribosomal protein uS4 family. In terms of assembly, part of the 30S ribosomal subunit. Contacts protein S5. The interaction surface between S4 and S5 is involved in control of translational fidelity.

Its function is as follows. One of the primary rRNA binding proteins, it binds directly to 16S rRNA where it nucleates assembly of the body of the 30S subunit. In terms of biological role, with S5 and S12 plays an important role in translational accuracy. The polypeptide is Small ribosomal subunit protein uS4 (Listeria monocytogenes serotype 4a (strain HCC23)).